A 273-amino-acid chain; its full sequence is 4-hydroxy-tetrahydrodipicolinate reductase (273 aa).

Residues 12 to 17 (GAGGRM) and Glu-38 contribute to the NAD(+) site. Residue Arg-39 participates in NADP(+) binding. Residues 102-104 (GTT) and 126-129 (AANF) contribute to the NAD(+) site. His-159 serves as the catalytic Proton donor/acceptor. His-160 lines the (S)-2,3,4,5-tetrahydrodipicolinate pocket. Lys-163 serves as the catalytic Proton donor. 169-170 (GT) contacts (S)-2,3,4,5-tetrahydrodipicolinate.

This sequence belongs to the DapB family. In terms of assembly, homotetramer.

The protein localises to the cytoplasm. It carries out the reaction (S)-2,3,4,5-tetrahydrodipicolinate + NAD(+) + H2O = (2S,4S)-4-hydroxy-2,3,4,5-tetrahydrodipicolinate + NADH + H(+). The catalysed reaction is (S)-2,3,4,5-tetrahydrodipicolinate + NADP(+) + H2O = (2S,4S)-4-hydroxy-2,3,4,5-tetrahydrodipicolinate + NADPH + H(+). Its pathway is amino-acid biosynthesis; L-lysine biosynthesis via DAP pathway; (S)-tetrahydrodipicolinate from L-aspartate: step 4/4. In terms of biological role, catalyzes the conversion of 4-hydroxy-tetrahydrodipicolinate (HTPA) to tetrahydrodipicolinate. The chain is 4-hydroxy-tetrahydrodipicolinate reductase from Shigella boydii serotype 18 (strain CDC 3083-94 / BS512).